The sequence spans 329 residues: DNA-directed RNA polymerase subunit alpha (329 aa).

The interval 1–235 (MQGSVTEFLK…EQLDAFVDLR (235 aa)) is alpha N-terminal domain (alpha-NTD). Residues 249–329 (FDPILLRPVD…NWPPASIAED (81 aa)) are alpha C-terminal domain (alpha-CTD).

The protein belongs to the RNA polymerase alpha chain family. As to quaternary structure, homodimer. The RNAP catalytic core consists of 2 alpha, 1 beta, 1 beta' and 1 omega subunit. When a sigma factor is associated with the core the holoenzyme is formed, which can initiate transcription.

It carries out the reaction RNA(n) + a ribonucleoside 5'-triphosphate = RNA(n+1) + diphosphate. DNA-dependent RNA polymerase catalyzes the transcription of DNA into RNA using the four ribonucleoside triphosphates as substrates. This chain is DNA-directed RNA polymerase subunit alpha, found in Actinobacillus succinogenes (strain ATCC 55618 / DSM 22257 / CCUG 43843 / 130Z).